The following is a 61-amino-acid chain: Small ribosomal subunit protein uS14 (61 aa).

The Zn(2+) site is built by Cys24, Cys27, Cys40, and Cys43.

Belongs to the universal ribosomal protein uS14 family. Zinc-binding uS14 subfamily. As to quaternary structure, part of the 30S ribosomal subunit. Contacts proteins S3 and S10. Requires Zn(2+) as cofactor.

Its function is as follows. Binds 16S rRNA, required for the assembly of 30S particles and may also be responsible for determining the conformation of the 16S rRNA at the A site. This chain is Small ribosomal subunit protein uS14, found in Pseudothermotoga lettingae (strain ATCC BAA-301 / DSM 14385 / NBRC 107922 / TMO) (Thermotoga lettingae).